We begin with the raw amino-acid sequence, 325 residues long: DNA-directed RNA polymerase subunit alpha (325 aa).

Positions 1-231 (MQTSLLKPKI…DQLSVFAALE (231 aa)) are alpha N-terminal domain (alpha-NTD). An alpha C-terminal domain (alpha-CTD) region spans residues 246-325 (IDPILLRPVD…ENWPPAGLDK (80 aa)).

It belongs to the RNA polymerase alpha chain family. Homodimer. The RNAP catalytic core consists of 2 alpha, 1 beta, 1 beta' and 1 omega subunit. When a sigma factor is associated with the core the holoenzyme is formed, which can initiate transcription.

It catalyses the reaction RNA(n) + a ribonucleoside 5'-triphosphate = RNA(n+1) + diphosphate. Functionally, DNA-dependent RNA polymerase catalyzes the transcription of DNA into RNA using the four ribonucleoside triphosphates as substrates. This is DNA-directed RNA polymerase subunit alpha from Burkholderia thailandensis (strain ATCC 700388 / DSM 13276 / CCUG 48851 / CIP 106301 / E264).